A 289-amino-acid chain; its full sequence is Eukaryotic translation initiation factor 3 subunit G (289 aa).

Residues 1–33 are disordered; that stretch reads MSRPTKADWADDEEFDDPSALPPQQITTNKDGT. In terms of domain architecture, RRM spans 209-287; that stretch reads ATLRVTNVSE…LILRVEFAKR (79 aa).

This sequence belongs to the eIF-3 subunit G family. As to quaternary structure, component of the eukaryotic translation initiation factor 3 (eIF-3) complex.

It localises to the cytoplasm. RNA-binding component of the eukaryotic translation initiation factor 3 (eIF-3) complex, which is involved in protein synthesis of a specialized repertoire of mRNAs and, together with other initiation factors, stimulates binding of mRNA and methionyl-tRNAi to the 40S ribosome. The eIF-3 complex specifically targets and initiates translation of a subset of mRNAs involved in cell proliferation. This subunit can bind 18S rRNA. The sequence is that of Eukaryotic translation initiation factor 3 subunit G (tif35) from Emericella nidulans (strain FGSC A4 / ATCC 38163 / CBS 112.46 / NRRL 194 / M139) (Aspergillus nidulans).